We begin with the raw amino-acid sequence, 1055 residues long: Vacuolar protein sorting-associated protein 54 (1055 aa).

Positions 363–383 (TKKIIEVHQKYEQKKHLLAKL) form a coiled coil. Positions 774–794 (IDDGPTKKPFKRTGSSATIDS) are disordered.

It belongs to the VPS54 family. As to quaternary structure, component of the Golgi-associated retrograde protein (GARP) complex, also called VFT (VPS fifty-three) complex, composed of VPS51, VPS52, VPS53 and VPS54.

It localises to the golgi apparatus. Its subcellular location is the trans-Golgi network. In terms of biological role, acts as a component of the GARP complex that is involved in retrograde transport from early and late endosomes to the trans-Golgi network (TGN). The GARP complex facilitates tethering as well as SNARE complex assembly at the Golgi. The protein is Vacuolar protein sorting-associated protein 54 (vps-54) of Caenorhabditis briggsae.